The primary structure comprises 78 residues: Large ribosomal subunit protein bL28 (78 aa).

Residues 1–21 (MSRVCQVTGKKPMVGNNRSHA) form a disordered region.

Belongs to the bacterial ribosomal protein bL28 family.

This Shewanella baltica (strain OS223) protein is Large ribosomal subunit protein bL28.